A 183-amino-acid polypeptide reads, in one-letter code: MNTEAAGKRVHVIQGEFKVVNDPHIVLSTILGSCVAACLRDPVTGVGGMNHFLLPGSASSPSSGADATRYGVHLMELLINGLLKQGARRDRLEAKIFGGARTIARFSNVGEQNAAFARRFLMDEGIRIVGESTGGDHGRKLEYWPSSGRARQYALTGVEAQRAMQMDQRPAAPKPVESSIEFF.

Belongs to the CheD family.

The enzyme catalyses L-glutaminyl-[protein] + H2O = L-glutamyl-[protein] + NH4(+). In terms of biological role, probably deamidates glutamine residues to glutamate on methyl-accepting chemotaxis receptors (MCPs), playing an important role in chemotaxis. This Sinorhizobium medicae (strain WSM419) (Ensifer medicae) protein is Probable chemoreceptor glutamine deamidase CheD.